The chain runs to 146 residues: MPKILVDADACPVKAEIKQVAEQFQLDVIFVASFNHYSVNTNGENWIFVDTGKESADMRMMNLANKGDIIVTQDIGLASILLAKGTYVFSNRGELYREEEMSLMLDIRYRHAKERQQGKYSKGPKAMSDQDRVLFKDRMTTFFKNK.

This sequence belongs to the UPF0178 family.

The sequence is that of UPF0178 protein Lin1493 from Listeria innocua serovar 6a (strain ATCC BAA-680 / CLIP 11262).